A 337-amino-acid chain; its full sequence is GTP 3',8-cyclase (337 aa).

Residues proline 17–lysine 243 form the Radical SAM core domain. Arginine 26 contributes to the GTP binding site. Positions 33 and 37 each coordinate [4Fe-4S] cluster. S-adenosyl-L-methionine is bound at residue tyrosine 39. Cysteine 40 serves as a coordination point for [4Fe-4S] cluster. GTP is bound at residue arginine 76. An S-adenosyl-L-methionine-binding site is contributed by glycine 80. Residue threonine 107 coordinates GTP. Serine 131 serves as a coordination point for S-adenosyl-L-methionine. Residue lysine 168 coordinates GTP. Methionine 202 contacts S-adenosyl-L-methionine. [4Fe-4S] cluster is bound by residues cysteine 265 and cysteine 268. Arginine 270–arginine 272 lines the GTP pocket. Cysteine 282 provides a ligand contact to [4Fe-4S] cluster.

Belongs to the radical SAM superfamily. MoaA family. Monomer and homodimer. The cofactor is [4Fe-4S] cluster.

It carries out the reaction GTP + AH2 + S-adenosyl-L-methionine = (8S)-3',8-cyclo-7,8-dihydroguanosine 5'-triphosphate + 5'-deoxyadenosine + L-methionine + A + H(+). It functions in the pathway cofactor biosynthesis; molybdopterin biosynthesis. Catalyzes the cyclization of GTP to (8S)-3',8-cyclo-7,8-dihydroguanosine 5'-triphosphate. The chain is GTP 3',8-cyclase from Haemophilus influenzae (strain PittEE).